The following is a 569-amino-acid chain: uncharacterized protein (569 aa).

The N-terminal stretch at 1 to 24 is a signal peptide; it reads MKFQRKYWGLLSTLGVSSAVALSA. Cysteine 25 carries N-palmitoyl cysteine lipidation. A lipid anchor (S-diacylglycerol cysteine) is attached at cysteine 25. Disordered regions lie at residues 111–137 and 242–267; these read SNMK…EWEV and GKNG…KKIE. Low complexity-rich tracts occupy residues 119–130 and 249–260; these read SSSSSSTGNNGS and KKMTTDSSSTQQ.

To M.pneumoniae MPN_456 and M.genitalium MG321 N-terminal region.

It localises to the cell membrane. This is an uncharacterized protein from Mycoplasma pneumoniae (strain ATCC 29342 / M129 / Subtype 1) (Mycoplasmoides pneumoniae).